Consider the following 378-residue polypeptide: Rhodopsin (378 aa).

At M1 to W53 the chain is on the extracellular side. N24 carries an N-linked (GlcNAc...) asparagine glycan. Residues H54–I78 form a helical membrane-spanning segment. Residues F79–N90 are Cytoplasmic-facing. Residues L91–C115 traverse the membrane as a helical segment. Residues Y116–Y130 are Extracellular-facing. C127 and C204 are oxidised to a cystine. A helical transmembrane segment spans residues G131–F150. At D151–G169 the chain is on the cytoplasmic side. The chain crosses the membrane as a helical span at residues A170 to N193. At R194–S217 the chain is on the extracellular side. N-linked (GlcNAc...) asparagine glycosylation is present at N200. The chain crosses the membrane as a helical span at residues Y218–V245. Over A246 to K280 the chain is Cytoplasmic. The chain crosses the membrane as a helical span at residues V281–I304. The Extracellular portion of the chain corresponds to F305–N311. A helical transmembrane segment spans residues P312–S336. K323 carries the post-translational modification N6-(retinylidene)lysine. Residues H337 to A378 are Cytoplasmic-facing. The interval G356–A378 is disordered. The span at T362–E371 shows a compositional bias: low complexity.

It belongs to the G-protein coupled receptor 1 family. Opsin subfamily. Phosphorylated on some or all of the serine and threonine residues present in the C-terminal region.

It localises to the membrane. In terms of biological role, visual pigments are the light-absorbing molecules that mediate vision. They consist of an apoprotein, opsin, covalently linked to cis-retinal. The polypeptide is Rhodopsin (Cataglyphis bombycina (Saharan silver ant)).